The chain runs to 226 residues: Large ribosomal subunit protein uL1 (226 aa).

Belongs to the universal ribosomal protein uL1 family. In terms of assembly, part of the 50S ribosomal subunit.

Binds directly to 23S rRNA. The L1 stalk is quite mobile in the ribosome, and is involved in E site tRNA release. Its function is as follows. Protein L1 is also a translational repressor protein, it controls the translation of the L11 operon by binding to its mRNA. The polypeptide is Large ribosomal subunit protein uL1 (Treponema denticola (strain ATCC 35405 / DSM 14222 / CIP 103919 / JCM 8153 / KCTC 15104)).